The following is a 269-amino-acid chain: Formamidopyrimidine-DNA glycosylase (269 aa).

The Schiff-base intermediate with DNA role is filled by P2. The active-site Proton donor is the E3. The Proton donor; for beta-elimination activity role is filled by K57. DNA is bound by residues H90, R109, and R150. An FPG-type zinc finger spans residues 235–269 (QVYGKAGEQCPNCAELIQELKIGQRNTFYCSSCQV). R259 serves as the catalytic Proton donor; for delta-elimination activity.

The protein belongs to the FPG family. As to quaternary structure, monomer. It depends on Zn(2+) as a cofactor.

The catalysed reaction is Hydrolysis of DNA containing ring-opened 7-methylguanine residues, releasing 2,6-diamino-4-hydroxy-5-(N-methyl)formamidopyrimidine.. It carries out the reaction 2'-deoxyribonucleotide-(2'-deoxyribose 5'-phosphate)-2'-deoxyribonucleotide-DNA = a 3'-end 2'-deoxyribonucleotide-(2,3-dehydro-2,3-deoxyribose 5'-phosphate)-DNA + a 5'-end 5'-phospho-2'-deoxyribonucleoside-DNA + H(+). Its function is as follows. Involved in base excision repair of DNA damaged by oxidation or by mutagenic agents. Acts as a DNA glycosylase that recognizes and removes damaged bases. Has a preference for oxidized purines, such as 7,8-dihydro-8-oxoguanine (8-oxoG). Has AP (apurinic/apyrimidinic) lyase activity and introduces nicks in the DNA strand. Cleaves the DNA backbone by beta-delta elimination to generate a single-strand break at the site of the removed base with both 3'- and 5'-phosphates. The chain is Formamidopyrimidine-DNA glycosylase from Vibrio atlanticus (strain LGP32) (Vibrio splendidus (strain Mel32)).